A 127-amino-acid chain; its full sequence is Snaclec CHH-B subunit alpha (127 aa).

3 disulfides stabilise this stretch: C4–C15, C32–C120, and C95–C112. In terms of domain architecture, C-type lectin spans 11–121; it reads YDRYCYKPFK…CEQQHSFICK (111 aa).

This sequence belongs to the snaclec family. As to quaternary structure, heterodimer of subunits alpha and beta; disulfide-linked. Expressed by the venom gland.

Its subcellular location is the secreted. Binds to the subunit GPIbalpha (GP1BA) of the platelet GPIb/V/IX receptor system. It inhibits ristocetin- and vWF-induced platelet aggregation in platelet-rich plasma by inhibiting the binding of vWF to GPIbalpha. This chain is Snaclec CHH-B subunit alpha, found in Crotalus horridus (Timber rattlesnake).